The chain runs to 227 residues: CDP-diacylglycerol--inositol 3-phosphatidyltransferase 1 (227 aa).

The next 2 helical transmembrane spans lie at leucine 12–valine 36 and proline 42–valine 61. Mg(2+) is bound by residues aspartate 55 and aspartate 58. Glycine 59, arginine 63, and serine 69 together coordinate a CDP-1,2-diacyl-sn-glycerol. The next 4 membrane-spanning stretches (helical) occupy residues alanine 73–tyrosine 95, phenylalanine 101–alanine 122, tyrosine 142–isoleucine 165, and valine 177–methionine 200. The Mg(2+) site is built by aspartate 76 and aspartate 80. Aspartate 80 acts as the Proton acceptor in catalysis.

This sequence belongs to the CDP-alcohol phosphatidyltransferase class-I family. The cofactor is Mg(2+). It depends on Mn(2+) as a cofactor. As to expression, expressed in stems, flowers, shoots and roots. Present in epidermal tissues.

It is found in the membrane. The catalysed reaction is a CDP-1,2-diacyl-sn-glycerol + myo-inositol = a 1,2-diacyl-sn-glycero-3-phospho-(1D-myo-inositol) + CMP + H(+). Functionally, catalyzes the biosynthesis of phosphatidylinositol (PtdIns) as well as PtdIns:inositol exchange reaction. May thus act to reduce an excessive cellular PtdIns content. The exchange activity is due to the reverse reaction of PtdIns synthase and is dependent on CMP, which is tightly bound to the enzyme. This chain is CDP-diacylglycerol--inositol 3-phosphatidyltransferase 1 (PIS1), found in Arabidopsis thaliana (Mouse-ear cress).